The primary structure comprises 416 residues: ORC1-type DNA replication protein 9 (416 aa).

ATP contacts are provided by residues 79–83, Tyr226, and Arg238; that span reads SGKSL.

The protein belongs to the CDC6/cdc18 family.

In terms of biological role, involved in regulation of DNA replication. The sequence is that of ORC1-type DNA replication protein 9 (cdc6i) from Haloarcula marismortui (strain ATCC 43049 / DSM 3752 / JCM 8966 / VKM B-1809) (Halobacterium marismortui).